Reading from the N-terminus, the 372-residue chain is Bifunctional coenzyme PQQ synthesis protein C/D (372 aa).

The pqqC stretch occupies residues 1–267 (MTAQFPPPVP…VAETNSAEDS (267 aa)). Residues 260–288 (ETNSAEDSPAAAASPAATTAEPTAFSGSD) are disordered. Residues 264-283 (AEDSPAAAASPAATTAEPTA) show a composition bias toward low complexity. Residues 268–280 (PAAAASPAATTAE) are linker. Residues 281–372 (PTAFSGSDVP…GLAQKRVLER (92 aa)) form a pqqD region.

This sequence in the N-terminal section; belongs to the PqqC family. The protein in the C-terminal section; belongs to the PqqD family. As to quaternary structure, monomer. Interacts with PqqE.

The enzyme catalyses 6-(2-amino-2-carboxyethyl)-7,8-dioxo-1,2,3,4,7,8-hexahydroquinoline-2,4-dicarboxylate + 3 O2 = pyrroloquinoline quinone + 2 H2O2 + 2 H2O + H(+). It participates in cofactor biosynthesis; pyrroloquinoline quinone biosynthesis. Its function is as follows. The PqqC region is involved in ring cyclization and eight-electron oxidation of 3a-(2-amino-2-carboxyethyl)-4,5-dioxo-4,5,6,7,8,9-hexahydroquinoline-7,9-dicarboxylic-acid to PQQ. In terms of biological role, the PqqD region functions as a PqqA binding domain and presents PqqA to PqqE. The polypeptide is Bifunctional coenzyme PQQ synthesis protein C/D (pqqCD) (Methylorubrum extorquens (strain ATCC 14718 / DSM 1338 / JCM 2805 / NCIMB 9133 / AM1) (Methylobacterium extorquens)).